The primary structure comprises 264 residues: 3-methyl-2-oxobutanoate hydroxymethyltransferase (264 aa).

Aspartate 44 and aspartate 83 together coordinate Mg(2+). 3-methyl-2-oxobutanoate-binding positions include 44–45 (DS), aspartate 83, and lysine 111. Glutamate 113 lines the Mg(2+) pocket. The active-site Proton acceptor is glutamate 180.

Belongs to the PanB family. As to quaternary structure, homodecamer; pentamer of dimers. Requires Mg(2+) as cofactor.

The protein resides in the cytoplasm. The enzyme catalyses 3-methyl-2-oxobutanoate + (6R)-5,10-methylene-5,6,7,8-tetrahydrofolate + H2O = 2-dehydropantoate + (6S)-5,6,7,8-tetrahydrofolate. It participates in cofactor biosynthesis; (R)-pantothenate biosynthesis; (R)-pantoate from 3-methyl-2-oxobutanoate: step 1/2. In terms of biological role, catalyzes the reversible reaction in which hydroxymethyl group from 5,10-methylenetetrahydrofolate is transferred onto alpha-ketoisovalerate to form ketopantoate. This chain is 3-methyl-2-oxobutanoate hydroxymethyltransferase, found in Marinobacter nauticus (strain ATCC 700491 / DSM 11845 / VT8) (Marinobacter aquaeolei).